Consider the following 159-residue polypeptide: Insertion element IS136 uncharacterized 16.9 kDa protein (159 aa).

Over residues 126–142 (RSFVSPSSSTPSTARSS) the composition is skewed to low complexity. A disordered region spans residues 126-159 (RSFVSPSSSTPSTARSSPGRPLPMQAFPAQTCAT).

This Agrobacterium tumefaciens (strain T37) protein is Insertion element IS136 uncharacterized 16.9 kDa protein.